The chain runs to 145 residues: Flagellar assembly factor FliW (145 aa).

This sequence belongs to the FliW family. As to quaternary structure, interacts with translational regulator CsrA and flagellin(s).

The protein localises to the cytoplasm. Functionally, acts as an anti-CsrA protein, binds CsrA and prevents it from repressing translation of its target genes, one of which is flagellin. Binds to flagellin and participates in the assembly of the flagellum. In Clostridium kluyveri (strain NBRC 12016), this protein is Flagellar assembly factor FliW.